We begin with the raw amino-acid sequence, 159 residues long: Small ribosomal subunit protein uS9 (159 aa).

It belongs to the universal ribosomal protein uS9 family.

This is Small ribosomal subunit protein uS9 from Rickettsia rickettsii (strain Iowa).